Reading from the N-terminus, the 542-residue chain is Cytochrome P450 monooxygenase sdnH (542 aa).

A helical transmembrane segment spans residues 25-45 (LYVAGGILGAFTVYSIILVVY). A disordered region spans residues 141 to 160 (IIPPRGLGQEDSIGSTRSHD). Residues 340–360 (FMGAGTYPTAATLIFVAYYIL) form a helical membrane-spanning segment. Cys483 is a binding site for heme. Asn506 is a glycosylation site (N-linked (GlcNAc...) asparagine).

It belongs to the cytochrome P450 family. Requires heme as cofactor.

The protein localises to the membrane. It participates in antibiotic biosynthesis. Cytochrome P450 monooxygenase; part of the gene cluster that mediates the biosynthesis of sordarin and hypoxysordarin, glycoside antibiotics with a unique tetracyclic diterpene aglycone structure. First, the geranylgeranyl diphosphate synthase sdnC constructs GGDP from farnesyl diphosphate and isopentenyl diphosphate. The diterpene cyclase sdnA then catalyzes the cyclization of GGDP to afford cycloaraneosene. Cycloaraneosene is then hydroxylated four times by the putative cytochrome P450 monooxygenases sdnB, sdnE, sdnF and sdnH to give a hydroxylated cycloaraneosene derivative such as cycloaraneosene-8,9,13,19-tetraol. Although the order of the hydroxylations is unclear, at least C8, C9 and C13 of the cycloaraneosene skeleton are hydroxylated before the sordaricin formation. Dehydration of the 13-hydroxy group of the hydroxylated cycloaraneosene derivative might be catalyzed by an unassigned hypothetical protein such as sdnG and sdnP to construct the cyclopentadiene moiety. The FAD-dependent oxidoreductase sdnN is proposed to catalyze the oxidation at C9 of the hydroxylated cycloaraneosene derivative and also catalyze the Baeyer-Villiger oxidation to give the lactone intermediate. The presumed lactone intermediate would be hydrolyzed to give an acrolein moiety and a carboxylate moiety. Then, [4+2]cycloaddition would occur between the acrolein moiety and the cyclopentadiene moiety to give sordaricin. SdnN might also be involved in the [4+2]cycloaddition after the hypothesized oxidation to accommodate the oxidized product and prompt the [4+2]cycloaddition. GDP-6-deoxy-D-altrose may be biosynthesized from GDP-D-mannose by the putative GDP-mannose-4,6-dehydratase sdnI and the short-chain dehydrogenase sdnK. The glycosyltransferase sdnJ catalyzes the attachment of 6-deoxy-D-altrose onto the 19-hydroxy group of sordaricin to give 4'-O-demethylsordarin. The methyltransferase sdnD would complete the biosynthesis of sordarin. Sordarin can be further modified into hypoxysordarin. The unique acyl chain at the 3'-hydroxy group of hypoxysordarin would be constructed by an iterative type I PKS sdnO and the trans-acting polyketide methyltransferase sdnL. SdnL would be responsible for the introduction of an alpha-methyl group of the polyketide chain. Alternatively, the beta-lactamase-like protein sdnR might be responsible for the cleavage and transfer of the polyketide chain from the PKS sdnO to sordarin. Two putative cytochrome P450 monooxygenases, sdnQ and sdnT, might catalyze the epoxidations of the polyketide chain to complete the biosynthesis of hypoxysordarin. Transcriptional regulators sdnM and sdnS are presumably encoded for the transcriptional regulation of the expression of the sdn gene cluster. This Sordaria araneosa (Pleurage araneosa) protein is Cytochrome P450 monooxygenase sdnH.